Reading from the N-terminus, the 1161-residue chain is DNA-directed RNA polymerase 132 kDa polypeptide (1161 aa).

The protein belongs to the RNA polymerase beta chain family. In terms of assembly, the DNA-dependent RNA polymerase used for intermediate and late genes expression consists of eight subunits (147) kDa, (133) kDa, (35) kDa, (30) kDa, (22) kDa, (19) kDa, (18) kDa and (7) kDa totalling more than 500 kDa in mass. The same holoenzyme, with the addition of the transcription-specificity factor RAP94, is used for early gene expression.

The protein localises to the virion. It catalyses the reaction RNA(n) + a ribonucleoside 5'-triphosphate = RNA(n+1) + diphosphate. Part of the DNA-dependent RNA polymerase which catalyzes the transcription of viral DNA into RNA using the four ribonucleoside triphosphates as substrates. Responsible for the transcription of early, intermediate and late genes. DNA-dependent RNA polymerase associates with the early transcription factor (ETF), itself composed of D6 and A7, thereby allowing the early genes transcription. Late transcription, and probably also intermediate transcription, require newly synthesized RNA polymerase. In Fowlpox virus (strain NVSL) (FPV), this protein is DNA-directed RNA polymerase 132 kDa polypeptide (RPO132).